The sequence spans 474 residues: Bifunctional protein GlmU (474 aa).

Residues 1–232 (MSALDVIIMA…ALQVAGVNSP (232 aa)) are pyrophosphorylase. UDP-N-acetyl-alpha-D-glucosamine contacts are provided by residues K23, Q78, 83–84 (GT), 105–107 (SGD), G142, E157, and N230. A Mg(2+)-binding site is contributed by D107. N230 contacts Mg(2+). Residues 233–253 (LQLAELERAHQLAQARALMEQ) form a linker region. The N-acetyltransferase stretch occupies residues 254-474 (GVRLADPARF…WQRPAKLPKA (221 aa)). UDP-N-acetyl-alpha-D-glucosamine-binding residues include R349 and K367. H379 serves as the catalytic Proton acceptor. Y382 and N393 together coordinate UDP-N-acetyl-alpha-D-glucosamine. Acetyl-CoA is bound by residues A396, 402 to 403 (NY), S421, G439, and R456. The disordered stretch occupies residues 454 to 474 (VARGKQVTKENWQRPAKLPKA).

It in the N-terminal section; belongs to the N-acetylglucosamine-1-phosphate uridyltransferase family. The protein in the C-terminal section; belongs to the transferase hexapeptide repeat family. In terms of assembly, homotrimer. It depends on Mg(2+) as a cofactor.

Its subcellular location is the cytoplasm. It carries out the reaction alpha-D-glucosamine 1-phosphate + acetyl-CoA = N-acetyl-alpha-D-glucosamine 1-phosphate + CoA + H(+). The catalysed reaction is N-acetyl-alpha-D-glucosamine 1-phosphate + UTP + H(+) = UDP-N-acetyl-alpha-D-glucosamine + diphosphate. Its pathway is nucleotide-sugar biosynthesis; UDP-N-acetyl-alpha-D-glucosamine biosynthesis; N-acetyl-alpha-D-glucosamine 1-phosphate from alpha-D-glucosamine 6-phosphate (route II): step 2/2. The protein operates within nucleotide-sugar biosynthesis; UDP-N-acetyl-alpha-D-glucosamine biosynthesis; UDP-N-acetyl-alpha-D-glucosamine from N-acetyl-alpha-D-glucosamine 1-phosphate: step 1/1. It participates in bacterial outer membrane biogenesis; LPS lipid A biosynthesis. Its function is as follows. Catalyzes the last two sequential reactions in the de novo biosynthetic pathway for UDP-N-acetylglucosamine (UDP-GlcNAc). The C-terminal domain catalyzes the transfer of acetyl group from acetyl coenzyme A to glucosamine-1-phosphate (GlcN-1-P) to produce N-acetylglucosamine-1-phosphate (GlcNAc-1-P), which is converted into UDP-GlcNAc by the transfer of uridine 5-monophosphate (from uridine 5-triphosphate), a reaction catalyzed by the N-terminal domain. The sequence is that of Bifunctional protein GlmU from Paracidovorax citrulli (strain AAC00-1) (Acidovorax citrulli).